A 187-amino-acid chain; its full sequence is Peptide deformylase (187 aa).

Residues Cys96 and His138 each contribute to the Fe cation site. Glu139 is a catalytic residue. His142 contacts Fe cation.

It belongs to the polypeptide deformylase family. The cofactor is Fe(2+).

The catalysed reaction is N-terminal N-formyl-L-methionyl-[peptide] + H2O = N-terminal L-methionyl-[peptide] + formate. Its function is as follows. Removes the formyl group from the N-terminal Met of newly synthesized proteins. Requires at least a dipeptide for an efficient rate of reaction. N-terminal L-methionine is a prerequisite for activity but the enzyme has broad specificity at other positions. This chain is Peptide deformylase, found in Brachyspira hyodysenteriae (strain ATCC 49526 / WA1).